We begin with the raw amino-acid sequence, 211 residues long: Glycerol-3-phosphate acyltransferase 2 (211 aa).

Transmembrane regions (helical) follow at residues 6 to 26, 57 to 77, 82 to 102, 124 to 144, and 148 to 168; these read FASL…VVVG, IIVF…PVIF, HYLC…PIFL, FFLI…MVSL, and ISVV…LSII.

It belongs to the PlsY family. Probably interacts with PlsX.

It is found in the cell membrane. The enzyme catalyses an acyl phosphate + sn-glycerol 3-phosphate = a 1-acyl-sn-glycero-3-phosphate + phosphate. The protein operates within lipid metabolism; phospholipid metabolism. Catalyzes the transfer of an acyl group from acyl-phosphate (acyl-PO(4)) to glycerol-3-phosphate (G3P) to form lysophosphatidic acid (LPA). This enzyme utilizes acyl-phosphate as fatty acyl donor, but not acyl-CoA or acyl-ACP. In Lactobacillus acidophilus (strain ATCC 700396 / NCK56 / N2 / NCFM), this protein is Glycerol-3-phosphate acyltransferase 2.